A 153-amino-acid polypeptide reads, in one-letter code: MRIQTERFGVLDVPDEAVIRFPQGIPGFPQEKAFVLLPCAEADAFAFLQSIMTPPLAFLLVTPFAFFPDYNAPIHIEQVRHIGIDENNLGEIWTIVTVPDNYHDMTTNLLAPLVINRKKGEAAQVVLEKTNYTTKHRLYPASASTEANGKGGG.

Belongs to the FliW family. Interacts with translational regulator CsrA and flagellin(s).

The protein resides in the cytoplasm. Its function is as follows. Acts as an anti-CsrA protein, binds CsrA and prevents it from repressing translation of its target genes, one of which is flagellin. Binds to flagellin and participates in the assembly of the flagellum. This is Flagellar assembly factor FliW from Heliobacterium modesticaldum (strain ATCC 51547 / Ice1).